The sequence spans 134 residues: Antifungal protein ginkbilobin-2 (134 aa).

An N-terminal signal peptide occupies residues 1-26; that stretch reads MKTMRMNSAFILAFALAAAMLILTEA. The region spanning 29 to 134 is the Gnk2-homologous domain; sequence TAFVSSACNT…CFIQYEQRSF (106 aa). Cystine bridges form between C36/C112, C88/C97, and C100/C125. N37 is an alpha-D-mannopyranose binding site. Alpha-D-mannopyranose-binding residues include R119 and E130.

In terms of assembly, binds actin in vitro.

The protein resides in the secreted. Functionally, possesses antifungal activity against F.oxysporum, T.reesei and C.albicans. Weakly inhibits the aspartic acid protease pepsin activity. Exerts antifungal activity against S.cerevisiae and F.culmorum through its carbohydrate-binding specificity. Acts as a lectin that stricly recognizes alpha-1,2-linked mannose moieties and interacts with the yeast cell wall mannan polysaccharide. Can interfere with the fungal actin remodeling resulting to the activation of an actin-dependent cell death. The protein is Antifungal protein ginkbilobin-2 of Ginkgo biloba (Ginkgo).